A 491-amino-acid chain; its full sequence is Protein nucleotidyltransferase YdiU (491 aa).

8 residues coordinate ATP: Gly94, Gly96, Arg97, Lys117, Asp129, Gly130, Arg180, and Arg187. The active-site Proton acceptor is the Asp256. The Mg(2+) site is built by Asn257 and Asp266. Asp266 is a binding site for ATP.

It belongs to the SELO family. The cofactor is Mg(2+). It depends on Mn(2+) as a cofactor.

The catalysed reaction is L-seryl-[protein] + ATP = 3-O-(5'-adenylyl)-L-seryl-[protein] + diphosphate. The enzyme catalyses L-threonyl-[protein] + ATP = 3-O-(5'-adenylyl)-L-threonyl-[protein] + diphosphate. It carries out the reaction L-tyrosyl-[protein] + ATP = O-(5'-adenylyl)-L-tyrosyl-[protein] + diphosphate. It catalyses the reaction L-histidyl-[protein] + UTP = N(tele)-(5'-uridylyl)-L-histidyl-[protein] + diphosphate. The catalysed reaction is L-seryl-[protein] + UTP = O-(5'-uridylyl)-L-seryl-[protein] + diphosphate. The enzyme catalyses L-tyrosyl-[protein] + UTP = O-(5'-uridylyl)-L-tyrosyl-[protein] + diphosphate. Nucleotidyltransferase involved in the post-translational modification of proteins. It can catalyze the addition of adenosine monophosphate (AMP) or uridine monophosphate (UMP) to a protein, resulting in modifications known as AMPylation and UMPylation. This chain is Protein nucleotidyltransferase YdiU, found in Bacillus cytotoxicus (strain DSM 22905 / CIP 110041 / 391-98 / NVH 391-98).